We begin with the raw amino-acid sequence, 512 residues long: MEEFPGYFELDRSRQHDFLYPLIFRESIYALAHDHGLNRNRSTLFENEVDYDKKYSLIIVKRLITRMYQRNHLIISANGSVQNPFWGHNKNLYSKILSEGFAVIVEIPFSLRVLSSFERKEKDIAKSPTLRSIHSIFPFLEDQFSHLDYLSHVLIPYPIHLEIAVQTLRYWVKDASSLHLLRIFLHEYWNSFSTPKKHITLFLKGNSRFFLFLYNSYVCEYESIFLFIRNQSSHFQSTSSGVFFERILFYVKIDHLVEVFVGTDFLDIRSFFKDPNMHYVRYQGKSILASKDTPLLMNKWKYYLVNLWQYHFSVWSQPGRININQLGKYSLDFLGYFSNVQLKSSVVRNQTLENSFLINNAMKKLETTVPILPLIGSLSRAKFCNALGHPISKPTRTDSSDSDIIDRFVRICRNLSHYHSGSSKKKSLYRIKYILRLSCVKTLARKHKSSVRAFLKRLGSELGDEFLTEEGVVLAVIFPKASGRLYRGRIWYLDIPCINDRVGDAEGSIFTK.

This sequence belongs to the intron maturase 2 family. MatK subfamily.

The protein resides in the plastid. The protein localises to the chloroplast. Functionally, usually encoded in the trnK tRNA gene intron. Probably assists in splicing its own and other chloroplast group II introns. The chain is Maturase K from Oenothera glazioviana (Large-flowered evening primrose).